Here is a 417-residue protein sequence, read N- to C-terminus: F-box protein At3g07870 (417 aa).

Residues 22-68 form the F-box domain; it reads GGGLESLPEDIIADIFSRLPISSIARLMFVCRSWRSVLTQHGRLSSS.

The protein is F-box protein At3g07870 of Arabidopsis thaliana (Mouse-ear cress).